Reading from the N-terminus, the 507-residue chain is ATP synthase subunit alpha, chloroplastic (507 aa).

An ATP-binding site is contributed by 170 to 177; it reads GDRQTGKT.

Belongs to the ATPase alpha/beta chains family. As to quaternary structure, F-type ATPases have 2 components, CF(1) - the catalytic core - and CF(0) - the membrane proton channel. CF(1) has five subunits: alpha(3), beta(3), gamma(1), delta(1), epsilon(1). CF(0) has four main subunits: a, b, b' and c.

It localises to the plastid. The protein localises to the chloroplast thylakoid membrane. It carries out the reaction ATP + H2O + 4 H(+)(in) = ADP + phosphate + 5 H(+)(out). Produces ATP from ADP in the presence of a proton gradient across the membrane. The alpha chain is a regulatory subunit. The sequence is that of ATP synthase subunit alpha, chloroplastic from Vitis vinifera (Grape).